The sequence spans 1016 residues: S-layer protein A (1016 aa).

The first 30 residues, 1-30 (MDLSTKKVISAGLVFIYALSLAMLVPMFLA), serve as a signal peptide directing secretion.

This sequence belongs to the Sulfolobales SlaA family. The mushroom-shaped unit cells of the Sulfolobales' S-layers may consist of three SlaB subunits and six SlaA subunits.

The protein localises to the secreted. The protein resides in the cell wall. It localises to the S-layer. Its function is as follows. S-layer large protein. May form the highly ordered outer sheath. This Acidianus ambivalens (Desulfurolobus ambivalens) protein is S-layer protein A.